Consider the following 546-residue polypeptide: Zinc metalloproteinase nas-9 (546 aa).

The signal sequence occupies residues M1–A14. A propeptide spanning residues Q15–R300 is cleaved from the precursor. Residue N248 is glycosylated (N-linked (GlcNAc...) asparagine). One can recognise a Peptidase M12A domain in the interval S308–R507. 5 disulfide bridges follow: C347-C506, C372-C392, C510-C546, C517-C539, and C526-C543. Residue H401 participates in Zn(2+) binding. Residue E402 is part of the active site. Zn(2+)-binding residues include H405 and H411. The 37-residue stretch at C510–C546 folds into the ShKT domain.

Zn(2+) serves as cofactor. In terms of tissue distribution, expressed in hypodermis, uterus and spermatheca.

It localises to the secreted. Functionally, metalloprotease. This chain is Zinc metalloproteinase nas-9 (nas-9), found in Caenorhabditis elegans.